The following is a 210-amino-acid chain: Redox-sensing transcriptional repressor Rex (210 aa).

The H-T-H motif DNA-binding region spans 16–55 (IYSRFLKRLDKKGITTVSSGDIAEGVGVSPAQVRKDLAYF). Residue 90–95 (GAGNLG) participates in NAD(+) binding.

Belongs to the transcriptional regulatory Rex family. As to quaternary structure, homodimer.

It is found in the cytoplasm. Its function is as follows. Modulates transcription in response to changes in cellular NADH/NAD(+) redox state. This chain is Redox-sensing transcriptional repressor Rex, found in Desulforamulus reducens (strain ATCC BAA-1160 / DSM 100696 / MI-1) (Desulfotomaculum reducens).